The primary structure comprises 334 residues: Phosphoribosylformylglycinamidine cyclo-ligase (334 aa).

The protein belongs to the AIR synthase family.

It localises to the cytoplasm. The enzyme catalyses 2-formamido-N(1)-(5-O-phospho-beta-D-ribosyl)acetamidine + ATP = 5-amino-1-(5-phospho-beta-D-ribosyl)imidazole + ADP + phosphate + H(+). It participates in purine metabolism; IMP biosynthesis via de novo pathway; 5-amino-1-(5-phospho-D-ribosyl)imidazole from N(2)-formyl-N(1)-(5-phospho-D-ribosyl)glycinamide: step 2/2. The sequence is that of Phosphoribosylformylglycinamidine cyclo-ligase from Thermococcus kodakarensis (strain ATCC BAA-918 / JCM 12380 / KOD1) (Pyrococcus kodakaraensis (strain KOD1)).